The chain runs to 101 residues: Phosphoribosyl-AMP cyclohydrolase (101 aa).

Asp-71 provides a ligand contact to Mg(2+). Cys-72 is a Zn(2+) binding site. Mg(2+) is bound by residues Asp-73 and Asp-75. Zn(2+) is bound by residues Cys-88 and Cys-95.

It belongs to the PRA-CH family. Homodimer. Mg(2+) serves as cofactor. Requires Zn(2+) as cofactor.

It localises to the cytoplasm. It catalyses the reaction 1-(5-phospho-beta-D-ribosyl)-5'-AMP + H2O = 1-(5-phospho-beta-D-ribosyl)-5-[(5-phospho-beta-D-ribosylamino)methylideneamino]imidazole-4-carboxamide. It participates in amino-acid biosynthesis; L-histidine biosynthesis; L-histidine from 5-phospho-alpha-D-ribose 1-diphosphate: step 3/9. Its function is as follows. Catalyzes the hydrolysis of the adenine ring of phosphoribosyl-AMP. In Bacillus cereus (strain B4264), this protein is Phosphoribosyl-AMP cyclohydrolase.